We begin with the raw amino-acid sequence, 344 residues long: Arginine N-succinyltransferase (344 aa).

L125 contributes to the succinyl-CoA binding site. Catalysis depends on H229, which acts as the Proton donor.

The protein belongs to the arginine N-succinyltransferase family.

It carries out the reaction succinyl-CoA + L-arginine = N(2)-succinyl-L-arginine + CoA + H(+). It functions in the pathway amino-acid degradation; L-arginine degradation via AST pathway; L-glutamate and succinate from L-arginine: step 1/5. Catalyzes the transfer of succinyl-CoA to arginine to produce N(2)-succinylarginine. The protein is Arginine N-succinyltransferase of Shigella flexneri.